A 413-amino-acid polypeptide reads, in one-letter code: Serine hydroxymethyltransferase (413 aa).

(6S)-5,6,7,8-tetrahydrofolate-binding positions include Leu119 and 123 to 125; that span reads GHL. Lys228 carries the N6-(pyridoxal phosphate)lysine modification. 351 to 353 is a (6S)-5,6,7,8-tetrahydrofolate binding site; it reads SPF.

It belongs to the SHMT family. In terms of assembly, homodimer. Requires pyridoxal 5'-phosphate as cofactor.

The protein resides in the cytoplasm. The catalysed reaction is (6R)-5,10-methylene-5,6,7,8-tetrahydrofolate + glycine + H2O = (6S)-5,6,7,8-tetrahydrofolate + L-serine. It functions in the pathway one-carbon metabolism; tetrahydrofolate interconversion. Its pathway is amino-acid biosynthesis; glycine biosynthesis; glycine from L-serine: step 1/1. Catalyzes the reversible interconversion of serine and glycine with tetrahydrofolate (THF) serving as the one-carbon carrier. This reaction serves as the major source of one-carbon groups required for the biosynthesis of purines, thymidylate, methionine, and other important biomolecules. Also exhibits THF-independent aldolase activity toward beta-hydroxyamino acids, producing glycine and aldehydes, via a retro-aldol mechanism. The chain is Serine hydroxymethyltransferase from Lysinibacillus sphaericus (strain C3-41).